We begin with the raw amino-acid sequence, 118 residues long: Ribonuclease P protein component (118 aa).

The protein belongs to the RnpA family. As to quaternary structure, consists of a catalytic RNA component (M1 or rnpB) and a protein subunit.

It catalyses the reaction Endonucleolytic cleavage of RNA, removing 5'-extranucleotides from tRNA precursor.. In terms of biological role, RNaseP catalyzes the removal of the 5'-leader sequence from pre-tRNA to produce the mature 5'-terminus. It can also cleave other RNA substrates such as 4.5S RNA. The protein component plays an auxiliary but essential role in vivo by binding to the 5'-leader sequence and broadening the substrate specificity of the ribozyme. This Rickettsia rickettsii (strain Iowa) protein is Ribonuclease P protein component.